The sequence spans 690 residues: Probable serine/threonine-protein kinase drkB (690 aa).

The signal sequence occupies residues 1–24; the sequence is MKVQIVFFSITVFIFVLFLLSVES. The interval 51 to 110 is disordered; sequence DSKSSEHTTSSSSSSNSKNKGDSSSSSSNSGSSSNSIISGDSNSKDAPTTSSDSLSPATP. Over residues 57–96 the composition is skewed to low complexity; the sequence is HTTSSSSSSNSKNKGDSSSSSSNSGSSSNSIISGDSNSKD. The span at 97–107 shows a compositional bias: polar residues; it reads APTTSSDSLSP. Asn-134, Asn-180, Asn-220, and Asn-250 each carry an N-linked (GlcNAc...) asparagine glycan. The interval 287–335 is disordered; that stretch reads TITPTPTITPTPTITPTVTPTATPSTTPSTTPTTTPSTPTPTPTKSPYS. Positions 296 to 323 are enriched in low complexity; that stretch reads PTPTITPTVTPTATPSTTPSTTPTTTPS. Residues 346 to 366 traverse the membrane as a helical segment; sequence IIIASSITGGLLISIFSFVFI. Residues 391–644 form the Protein kinase domain; sequence IKIGVRIGKG…EQCLEILESI (254 aa). ATP is bound by residues 397 to 405 and Lys-418; that span reads IGKGNFGEV. Asp-514 acts as the Proton acceptor in catalysis. The segment at 649–690 is disordered; it reads FDDIPVNNNNNNNSNNNENNNENNNNSDNNNNDINYSNRVIN. Positions 655-681 are enriched in low complexity; it reads NNNNNNNSNNNENNNENNNNSDNNNND.

Belongs to the protein kinase superfamily. TKL Ser/Thr protein kinase family.

Its subcellular location is the membrane. It carries out the reaction L-seryl-[protein] + ATP = O-phospho-L-seryl-[protein] + ADP + H(+). It catalyses the reaction L-threonyl-[protein] + ATP = O-phospho-L-threonyl-[protein] + ADP + H(+). The sequence is that of Probable serine/threonine-protein kinase drkB (drkB) from Dictyostelium discoideum (Social amoeba).